Here is a 442-residue protein sequence, read N- to C-terminus: tRNA-2-methylthio-N(6)-dimethylallyladenosine synthase (442 aa).

In terms of domain architecture, MTTase N-terminal spans lysine 5–arginine 122. The [4Fe-4S] cluster site is built by cysteine 14, cysteine 51, cysteine 85, cysteine 159, cysteine 163, and cysteine 166. The region spanning arginine 145–alanine 377 is the Radical SAM core domain. The TRAM domain maps to alanine 380–valine 442.

Belongs to the methylthiotransferase family. MiaB subfamily. As to quaternary structure, monomer. [4Fe-4S] cluster serves as cofactor.

It localises to the cytoplasm. It carries out the reaction N(6)-dimethylallyladenosine(37) in tRNA + (sulfur carrier)-SH + AH2 + 2 S-adenosyl-L-methionine = 2-methylsulfanyl-N(6)-dimethylallyladenosine(37) in tRNA + (sulfur carrier)-H + 5'-deoxyadenosine + L-methionine + A + S-adenosyl-L-homocysteine + 2 H(+). In terms of biological role, catalyzes the methylthiolation of N6-(dimethylallyl)adenosine (i(6)A), leading to the formation of 2-methylthio-N6-(dimethylallyl)adenosine (ms(2)i(6)A) at position 37 in tRNAs that read codons beginning with uridine. The polypeptide is tRNA-2-methylthio-N(6)-dimethylallyladenosine synthase (Methylobacillus flagellatus (strain ATCC 51484 / DSM 6875 / VKM B-1610 / KT)).